The following is a 126-amino-acid chain: Putative esterase ComA2 (126 aa).

It belongs to the thioesterase PaaI family.

In terms of biological role, is not required for competence. The sequence is that of Putative esterase ComA2 (yuxO) from Bacillus subtilis (strain 168).